A 353-amino-acid chain; its full sequence is Protein MGF 360-13L (353 aa).

It belongs to the asfivirus MGF 360 family.

Plays a role in virus cell tropism, and may be required for efficient virus replication in macrophages. The polypeptide is Protein MGF 360-13L (African swine fever virus (isolate Pig/Kenya/KEN-50/1950) (ASFV)).